We begin with the raw amino-acid sequence, 151 residues long: MGRMHSRGKGISASALPYKRSSPSWLKTTPQDVDESICKFAKKGLTPSQIGVILRDSHGIPQVKSVTGSKILRILKAHGLAPEIPEDLYHLIKKAVAIRKHLERNRKDKDSKFRLILVESRIHRLARYYKKTKKLPPVWKYESTTASTLVA.

This sequence belongs to the universal ribosomal protein uS15 family.

The protein is Small ribosomal subunit protein uS15z (RPS13A) of Arabidopsis thaliana (Mouse-ear cress).